The following is a 131-amino-acid chain: Small ribosomal subunit protein uS8 (131 aa).

Belongs to the universal ribosomal protein uS8 family. As to quaternary structure, part of the 30S ribosomal subunit. Contacts proteins S5 and S12.

In terms of biological role, one of the primary rRNA binding proteins, it binds directly to 16S rRNA central domain where it helps coordinate assembly of the platform of the 30S subunit. In Helicobacter pylori (strain P12), this protein is Small ribosomal subunit protein uS8.